Reading from the N-terminus, the 207-residue chain is MVADAQVSESKTAVRRGRLVVLAGPSAVGKSSVVRLLRERMPELVFSVSATTRDPRPGEVDGKDYRFTSRDEFQRMIESGELLEWAEIHGGLQLSGTPAAPVRRAIEQGKPVLVEVDLAGARAVRAAMPEALLVFMAPPSWDVLVERLTGRGTESAEVVERRLATARVELEAQDEFDEVIVNEDVSRSCDELVSLLVGRPEQSESTH.

The region spanning 17–197 (GRLVVLAGPS…SCDELVSLLV (181 aa)) is the Guanylate kinase-like domain. Residue 24–31 (GPSAVGKS) coordinates ATP.

This sequence belongs to the guanylate kinase family.

The protein localises to the cytoplasm. The enzyme catalyses GMP + ATP = GDP + ADP. Its function is as follows. Essential for recycling GMP and indirectly, cGMP. This chain is Guanylate kinase, found in Rhodococcus jostii (strain RHA1).